Reading from the N-terminus, the 954-residue chain is Glycine dehydrogenase (decarboxylating) (954 aa).

Lys706 is modified (N6-(pyridoxal phosphate)lysine).

This sequence belongs to the GcvP family. As to quaternary structure, the glycine cleavage system is composed of four proteins: P, T, L and H. It depends on pyridoxal 5'-phosphate as a cofactor.

It carries out the reaction N(6)-[(R)-lipoyl]-L-lysyl-[glycine-cleavage complex H protein] + glycine + H(+) = N(6)-[(R)-S(8)-aminomethyldihydrolipoyl]-L-lysyl-[glycine-cleavage complex H protein] + CO2. Its function is as follows. The glycine cleavage system catalyzes the degradation of glycine. The P protein binds the alpha-amino group of glycine through its pyridoxal phosphate cofactor; CO(2) is released and the remaining methylamine moiety is then transferred to the lipoamide cofactor of the H protein. The protein is Glycine dehydrogenase (decarboxylating) of Pseudomonas savastanoi pv. phaseolicola (strain 1448A / Race 6) (Pseudomonas syringae pv. phaseolicola (strain 1448A / Race 6)).